A 182-amino-acid polypeptide reads, in one-letter code: ATP synthase subunit delta (182 aa).

It belongs to the ATPase delta chain family. In terms of assembly, F-type ATPases have 2 components, F(1) - the catalytic core - and F(0) - the membrane proton channel. F(1) has five subunits: alpha(3), beta(3), gamma(1), delta(1), epsilon(1). CF(0) has four main subunits: a(1), b(1), b'(1) and c(10-14). The alpha and beta chains form an alternating ring which encloses part of the gamma chain. F(1) is attached to F(0) by a central stalk formed by the gamma and epsilon chains, while a peripheral stalk is formed by the delta, b and b' chains.

The protein resides in the cellular thylakoid membrane. F(1)F(0) ATP synthase produces ATP from ADP in the presence of a proton or sodium gradient. F-type ATPases consist of two structural domains, F(1) containing the extramembraneous catalytic core and F(0) containing the membrane proton channel, linked together by a central stalk and a peripheral stalk. During catalysis, ATP synthesis in the catalytic domain of F(1) is coupled via a rotary mechanism of the central stalk subunits to proton translocation. Functionally, this protein is part of the stalk that links CF(0) to CF(1). It either transmits conformational changes from CF(0) to CF(1) or is implicated in proton conduction. This is ATP synthase subunit delta from Prochlorococcus marinus (strain NATL2A).